A 97-amino-acid polypeptide reads, in one-letter code: Aspartyl/glutamyl-tRNA(Asn/Gln) amidotransferase subunit C (97 aa).

It belongs to the GatC family. As to quaternary structure, heterotrimer of A, B and C subunits.

The catalysed reaction is L-glutamyl-tRNA(Gln) + L-glutamine + ATP + H2O = L-glutaminyl-tRNA(Gln) + L-glutamate + ADP + phosphate + H(+). The enzyme catalyses L-aspartyl-tRNA(Asn) + L-glutamine + ATP + H2O = L-asparaginyl-tRNA(Asn) + L-glutamate + ADP + phosphate + 2 H(+). Allows the formation of correctly charged Asn-tRNA(Asn) or Gln-tRNA(Gln) through the transamidation of misacylated Asp-tRNA(Asn) or Glu-tRNA(Gln) in organisms which lack either or both of asparaginyl-tRNA or glutaminyl-tRNA synthetases. The reaction takes place in the presence of glutamine and ATP through an activated phospho-Asp-tRNA(Asn) or phospho-Glu-tRNA(Gln). The sequence is that of Aspartyl/glutamyl-tRNA(Asn/Gln) amidotransferase subunit C from Synechococcus sp. (strain CC9902).